The chain runs to 522 residues: tRNA-2-methylthio-N(6)-dimethylallyladenosine synthase (522 aa).

An MTTase N-terminal domain is found at 24–140 (RTYEVKTYGC…LPTLLQRAEH (117 aa)). 6 residues coordinate [4Fe-4S] cluster: Cys33, Cys69, Cys103, Cys177, Cys181, and Cys184. A Radical SAM core domain is found at 163–399 (RESAYAGWVS…MVVQEQVCEE (237 aa)). The 72-residue stretch at 402–473 (QKLIGTTVEL…PFFLIADSGV (72 aa)) folds into the TRAM domain.

This sequence belongs to the methylthiotransferase family. MiaB subfamily. Monomer. The cofactor is [4Fe-4S] cluster.

Its subcellular location is the cytoplasm. The enzyme catalyses N(6)-dimethylallyladenosine(37) in tRNA + (sulfur carrier)-SH + AH2 + 2 S-adenosyl-L-methionine = 2-methylsulfanyl-N(6)-dimethylallyladenosine(37) in tRNA + (sulfur carrier)-H + 5'-deoxyadenosine + L-methionine + A + S-adenosyl-L-homocysteine + 2 H(+). In terms of biological role, catalyzes the methylthiolation of N6-(dimethylallyl)adenosine (i(6)A), leading to the formation of 2-methylthio-N6-(dimethylallyl)adenosine (ms(2)i(6)A) at position 37 in tRNAs that read codons beginning with uridine. The chain is tRNA-2-methylthio-N(6)-dimethylallyladenosine synthase from Corynebacterium glutamicum (strain ATCC 13032 / DSM 20300 / JCM 1318 / BCRC 11384 / CCUG 27702 / LMG 3730 / NBRC 12168 / NCIMB 10025 / NRRL B-2784 / 534).